The following is a 401-amino-acid chain: Bone morphogenetic protein 4 (401 aa).

An N-terminal signal peptide occupies residues 1 to 19 (MIPGNRMLMVILLSQVLLG). Residues 20–287 (GTNYASLIPD…GHALTRRSKR (268 aa)) constitute a propeptide that is removed on maturation. 3 N-linked (GlcNAc...) asparagine glycosylation sites follow: N141, N204, and N238. The disordered stretch occupies residues 279–299 (HALTRRSKRSPKQQRPRKKNK). A compositionally biased stretch (basic residues) spans 280 to 299 (ALTRRSKRSPKQQRPRKKNK). 3 disulfides stabilise this stretch: C301–C366, C330–C398, and C334–C400. N-linked (GlcNAc...) asparagine glycans are attached at residues N343 and N358.

This sequence belongs to the TGF-beta family. Homodimer; disulfide-linked. Forms heterodimers with the TGF-beta family member derriere. Part of a complex consisting of twsg1 and chrd. Interacts with tsku.

The protein resides in the secreted. The protein localises to the extracellular space. It is found in the extracellular matrix. Functionally, posterior-ventralizing factor in Xenopus mesoderm induction. Induces posteroventral mesoderm and counteracts dorsalizing signals such as activin. In Xenopus laevis (African clawed frog), this protein is Bone morphogenetic protein 4 (bmp4).